Here is a 159-residue protein sequence, read N- to C-terminus: MSKVKKKSTSTGTIALNKRAKYDYFVDQKFEAGLVLSGWEVKSLREGKAQLVDAFVIIHQNEAWLVGARITPLLSASTHVVCEPMRQRKLLLNRKELERIIQVTEQKGKTCAAMALYWKGNKIKCEVALVTGKKEHDKRDTERDRDWSRDKERLMKHNA.

The interval 134-159 is disordered; the sequence is KEHDKRDTERDRDWSRDKERLMKHNA.

The protein belongs to the SmpB family.

It is found in the cytoplasm. Functionally, required for rescue of stalled ribosomes mediated by trans-translation. Binds to transfer-messenger RNA (tmRNA), required for stable association of tmRNA with ribosomes. tmRNA and SmpB together mimic tRNA shape, replacing the anticodon stem-loop with SmpB. tmRNA is encoded by the ssrA gene; the 2 termini fold to resemble tRNA(Ala) and it encodes a 'tag peptide', a short internal open reading frame. During trans-translation Ala-aminoacylated tmRNA acts like a tRNA, entering the A-site of stalled ribosomes, displacing the stalled mRNA. The ribosome then switches to translate the ORF on the tmRNA; the nascent peptide is terminated with the 'tag peptide' encoded by the tmRNA and targeted for degradation. The ribosome is freed to recommence translation, which seems to be the essential function of trans-translation. The protein is SsrA-binding protein of Marinomonas sp. (strain MWYL1).